The chain runs to 517 residues: UDP-N-acetylmuramyl-tripeptide synthetase (517 aa).

UDP-N-acetyl-alpha-D-muramoyl-L-alanyl-D-glutamate is bound at residue Ser-38. 116–122 (GTKGKTT) is a binding site for ATP. UDP-N-acetyl-alpha-D-muramoyl-L-alanyl-D-glutamate-binding positions include Asn-160, 162-163 (TT), Ser-189, and Arg-197. Lys-231 carries the post-translational modification N6-carboxylysine.

It belongs to the MurCDEF family. MurE subfamily. Post-translationally, carboxylation is probably crucial for Mg(2+) binding and, consequently, for the gamma-phosphate positioning of ATP.

Its subcellular location is the cytoplasm. It functions in the pathway cell wall biogenesis; peptidoglycan biosynthesis. Its function is as follows. Catalyzes the addition of an amino acid to the nucleotide precursor UDP-N-acetylmuramoyl-L-alanyl-D-glutamate (UMAG) in the biosynthesis of bacterial cell-wall peptidoglycan. In Lacticaseibacillus paracasei (strain ATCC 334 / BCRC 17002 / CCUG 31169 / CIP 107868 / KCTC 3260 / NRRL B-441) (Lactobacillus paracasei), this protein is UDP-N-acetylmuramyl-tripeptide synthetase.